Here is a 196-residue protein sequence, read N- to C-terminus: Peptidyl-tRNA hydrolase (196 aa).

Tyrosine 17 contacts tRNA. Residue histidine 22 is the Proton acceptor of the active site. The tRNA site is built by phenylalanine 68, asparagine 70, and asparagine 116.

Belongs to the PTH family. In terms of assembly, monomer.

The protein resides in the cytoplasm. It carries out the reaction an N-acyl-L-alpha-aminoacyl-tRNA + H2O = an N-acyl-L-amino acid + a tRNA + H(+). Its function is as follows. Hydrolyzes ribosome-free peptidyl-tRNAs (with 1 or more amino acids incorporated), which drop off the ribosome during protein synthesis, or as a result of ribosome stalling. Functionally, catalyzes the release of premature peptidyl moieties from peptidyl-tRNA molecules trapped in stalled 50S ribosomal subunits, and thus maintains levels of free tRNAs and 50S ribosomes. The sequence is that of Peptidyl-tRNA hydrolase from Yersinia pestis bv. Antiqua (strain Antiqua).